A 109-amino-acid chain; its full sequence is Large ribosomal subunit protein uL23 (109 aa).

Belongs to the universal ribosomal protein uL23 family. Part of the 50S ribosomal subunit. Contacts protein L29, and trigger factor when it is bound to the ribosome.

In terms of biological role, one of the early assembly proteins it binds 23S rRNA. One of the proteins that surrounds the polypeptide exit tunnel on the outside of the ribosome. Forms the main docking site for trigger factor binding to the ribosome. The chain is Large ribosomal subunit protein uL23 from Aquifex pyrophilus.